We begin with the raw amino-acid sequence, 120 residues long: Small ribosomal subunit protein eS24 (120 aa).

Residues 101–120 form a disordered region; that stretch reads RDAGTKQKKGGSKGGQGAKG.

This sequence belongs to the eukaryotic ribosomal protein eS24 family.

The protein is Small ribosomal subunit protein eS24 of Saccharolobus solfataricus (strain ATCC 35092 / DSM 1617 / JCM 11322 / P2) (Sulfolobus solfataricus).